The primary structure comprises 152 residues: Transcriptional regulator MraZ (152 aa).

SpoVT-AbrB domains are found at residues 5 to 52 (ASSL…PLAQ) and 81 to 124 (ATEY…DEAR).

It belongs to the MraZ family. Forms oligomers.

Its subcellular location is the cytoplasm. It is found in the nucleoid. This is Transcriptional regulator MraZ from Pseudoalteromonas translucida (strain TAC 125).